The chain runs to 463 residues: Cysteine--tRNA ligase (463 aa).

C29 provides a ligand contact to Zn(2+). Positions 31 to 41 (MTIYDLCHIGH) match the 'HIGH' region motif. Zn(2+) contacts are provided by C218, H243, and E247. Positions 275–279 (KMSKS) match the 'KMSKS' region motif. ATP is bound at residue K278.

Belongs to the class-I aminoacyl-tRNA synthetase family. As to quaternary structure, monomer. Zn(2+) serves as cofactor.

It localises to the cytoplasm. The catalysed reaction is tRNA(Cys) + L-cysteine + ATP = L-cysteinyl-tRNA(Cys) + AMP + diphosphate. This Polaromonas naphthalenivorans (strain CJ2) protein is Cysteine--tRNA ligase.